The following is a 602-amino-acid chain: MAAAAAVAKSVEAGGEPGGGGGGAWSTVSRSGRSSYSAGGGVGGGKVGELAEGLAGVEIGGERRLDKYDIPVEVSGEDVPPPADGFEAAGLVEAVLRNVARCGYESPTPVQRYSMPIALAGRDLMACAQTGSGKTAAFCLPVVSGLVAAGGSGIGHRERSSFNRAAAKPRALVLAPTRELAAQINEEAKKFSFQTGLRVVVAYGGTPMYNQLRDLERGADILVATPGRLVDMVERSKVSLEAIKYLVMDEADRMLDMGFEPQIRKIVERMNMPRKSVRQTMLFSATFPPEIQRLASDFLSNYIFITVGRVGSSTDLIMQKVELLSDGEKRGYLLDLLQRQSVGVANSKLQQPLTLVFVETKREADSLRYWLYSKGFPATAIHGDRTQQERESALRSFKTGLTPIMVATDVASRGLDVPNVAHVINYDLPKSIEDYVHRIGRTGRAGKAGSATAFFTESDHSLAKGLLELMTEAKQDVPDWLVQYAERPYYGGSSYGGRNRRSGGGGNRFAGRDFRQGSGGGYSGGGGGGGYSGGGGGGGYSGGGGGYSGGGRGGGYSRGGRGGYSGGGGGGGGDPYRASAPPPRYYPSYPMGTADINASGWD.

The segment at 9-31 (KSVEAGGEPGGGGGGAWSTVSRS) is disordered. Gly residues predominate over residues 15 to 24 (GEPGGGGGGA). The short motif at 84-112 (DGFEAAGLVEAVLRNVARCGYESPTPVQR) is the Q motif element. The Helicase ATP-binding domain maps to 115–305 (MPIALAGRDL…SDFLSNYIFI (191 aa)). An ATP-binding site is contributed by 128-135 (AQTGSGKT). Positions 249 to 252 (DEAD) match the DEAD box motif. Positions 328–485 (EKRGYLLDLL…DVPDWLVQYA (158 aa)) constitute a Helicase C-terminal domain. 2 disordered regions span residues 492 to 521 (GSSYGGRNRRSGGGGNRFAGRDFRQGSGGG) and 552 to 602 (RGGG…SGWD). Over residues 552–574 (RGGGYSRGGRGGYSGGGGGGGGD) the composition is skewed to gly residues.

Belongs to the DEAD box helicase family. DDX3/DED1 subfamily.

It carries out the reaction ATP + H2O = ADP + phosphate + H(+). The sequence is that of DEAD-box ATP-dependent RNA helicase 52A from Oryza sativa subsp. japonica (Rice).